The chain runs to 119 residues: Parathyroid hormone (119 aa).

An N-terminal signal peptide occupies residues 1–25 (MTSTKNLAKAIVILYAICFFTNSDG). Residues 26–31 (RPMMKR) constitute a propeptide that is removed on maturation.

The protein belongs to the parathyroid hormone family. Interacts with PTH1R (via N-terminal extracellular domain).

It is found in the secreted. In terms of biological role, parathyroid hormone elevates calcium level by dissolving the salts in bone and preventing their renal excretion. Acts by binding to its receptor, PTH1R, activating G protein-coupled receptor signaling. Stimulates [1-14C]-2-deoxy-D-glucose (2DG) transport and glycogen synthesis in osteoblastic cells. This chain is Parathyroid hormone, found in Gallus gallus (Chicken).